Consider the following 397-residue polypeptide: Multidrug resistance protein MdtH (397 aa).

Transmembrane regions (helical) follow at residues 11–31 (WFLA…MPMI), 32–52 (SLRF…ALGL), 71–91 (FGAR…FASL), 94–114 (AQSG…GCLF), 137–157 (LLMM…SWLL), 163–183 (YVCL…LLIL), 211–231 (LVLI…IFPI), 242–262 (AVGW…YPLA), 291–311 (FANT…GIVI), 340–360 (LALG…YAML), and 366–386 (LPWL…VNCF).

It belongs to the major facilitator superfamily. DHA1 family. MdtH (TC 2.A.1.2.21) subfamily.

It is found in the cell inner membrane. This Aeromonas hydrophila subsp. hydrophila (strain ATCC 7966 / DSM 30187 / BCRC 13018 / CCUG 14551 / JCM 1027 / KCTC 2358 / NCIMB 9240 / NCTC 8049) protein is Multidrug resistance protein MdtH.